A 688-amino-acid polypeptide reads, in one-letter code: Methionine--tRNA ligase (688 aa).

The short motif at 20–30 (PYANGSIHLGH) is the 'HIGH' region element. Residues cysteine 151, cysteine 154, cysteine 164, and cysteine 167 each contribute to the Zn(2+) site. The short motif at 337-341 (KMSKS) is the 'KMSKS' region element. ATP is bound at residue lysine 340. One can recognise a tRNA-binding domain in the interval 587 to 688 (TFAQVDLRIA…EGAQPGMRVM (102 aa)).

This sequence belongs to the class-I aminoacyl-tRNA synthetase family. MetG type 1 subfamily. Homodimer. It depends on Zn(2+) as a cofactor.

It is found in the cytoplasm. It carries out the reaction tRNA(Met) + L-methionine + ATP = L-methionyl-tRNA(Met) + AMP + diphosphate. In terms of biological role, is required not only for elongation of protein synthesis but also for the initiation of all mRNA translation through initiator tRNA(fMet) aminoacylation. The protein is Methionine--tRNA ligase of Vibrio parahaemolyticus serotype O3:K6 (strain RIMD 2210633).